The chain runs to 225 residues: Small ribosomal subunit protein eS1 (225 aa).

The protein belongs to the eukaryotic ribosomal protein eS1 family.

The sequence is that of Small ribosomal subunit protein eS1 from Methanococcus maripaludis (strain DSM 14266 / JCM 13030 / NBRC 101832 / S2 / LL).